The following is a 305-amino-acid chain: tRNA pseudouridine synthase B (305 aa).

Aspartate 48 (nucleophile) is an active-site residue.

The protein belongs to the pseudouridine synthase TruB family. Type 1 subfamily.

The enzyme catalyses uridine(55) in tRNA = pseudouridine(55) in tRNA. Responsible for synthesis of pseudouridine from uracil-55 in the psi GC loop of transfer RNAs. The protein is tRNA pseudouridine synthase B of Pseudomonas fluorescens (strain ATCC BAA-477 / NRRL B-23932 / Pf-5).